Consider the following 320-residue polypeptide: Pyrroline-5-carboxylate reductase (320 aa).

Belongs to the pyrroline-5-carboxylate reductase family.

It catalyses the reaction L-proline + NADP(+) = (S)-1-pyrroline-5-carboxylate + NADPH + 2 H(+). The enzyme catalyses L-proline + NAD(+) = (S)-1-pyrroline-5-carboxylate + NADH + 2 H(+). It participates in amino-acid biosynthesis; L-proline biosynthesis; L-proline from L-glutamate 5-semialdehyde: step 1/1. The polypeptide is Pyrroline-5-carboxylate reductase (P5CR) (Lophium arboricola (Zalerion arboricola)).